Reading from the N-terminus, the 251-residue chain is Thiamine thiazole synthase (251 aa).

Residues Ser34, 53–54, Gly61, Val125, and 151–153 each bind NAD(+); these read EK and HVD. Asp153 and His168 together coordinate Fe cation. Met216 contributes to the NAD(+) binding site. Arg226 is a glycine binding site.

Belongs to the THI4 family. Homooctamer; tetramer of dimers. Requires Fe(2+) as cofactor.

It catalyses the reaction hydrogen sulfide + glycine + NAD(+) = ADP-5-ethyl-4-methylthiazole-2-carboxylate + nicotinamide + 3 H2O + H(+). It functions in the pathway cofactor biosynthesis; thiamine diphosphate biosynthesis. Functionally, involved in the biosynthesis of the thiazole moiety of thiamine. Catalyzes the conversion of NAD and glycine to adenosine diphosphate 5-(2-hydroxyethyl)-4-methylthiazole-2-carboxylate (ADT), an adenylated thiazole intermediate, using free sulfide as a source of sulfur. The chain is Thiamine thiazole synthase from Thermococcus kodakarensis (strain ATCC BAA-918 / JCM 12380 / KOD1) (Pyrococcus kodakaraensis (strain KOD1)).